We begin with the raw amino-acid sequence, 410 residues long: Peptidase T (410 aa).

Residues 11–30 (RYAEIDTQSDPDSESTPSTE) form a disordered region. Zn(2+) is bound at residue His-78. Residue Asp-80 is part of the active site. Zn(2+) is bound at residue Asp-140. Residue Glu-174 is the Proton acceptor of the active site. Zn(2+)-binding residues include Glu-175, Asp-197, and His-379.

The protein belongs to the peptidase M20B family. Requires Zn(2+) as cofactor.

The protein resides in the cytoplasm. It carries out the reaction Release of the N-terminal residue from a tripeptide.. Functionally, cleaves the N-terminal amino acid of tripeptides. The protein is Peptidase T of Staphylococcus carnosus (strain TM300).